Consider the following 162-residue polypeptide: Selenoprotein F (162 aa).

The N-terminal stretch at 1–28 (MAARRDGWLGPAFGLRLLLATVLQTVSA) is a signal peptide. Sec93 is a non-standard amino acid (selenocysteine).

This sequence belongs to the selenoprotein M/F family. As to quaternary structure, forms a tight complex with UGGT1/UGCGL1. Interacts with UGGT2/UGCGL2. Interacts with RDH11.

Its subcellular location is the endoplasmic reticulum lumen. Functionally, may be involved in redox reactions associated with the formation of disulfide bonds. May contribute to the quality control of protein folding in the endoplasmic reticulum. May regulate protein folding by enhancing the catalytic activity of UGGT1/UGCGL1 and UGGT2/UGCGL2. This is Selenoprotein F from Bos taurus (Bovine).